The chain runs to 164 residues: Oocyte-expressed protein homolog (164 aa).

A KH; atypical domain is found at 44–105; sequence PLVLYMEAWV…SAQTRMKNIL (62 aa).

It belongs to the KHDC1 family. As to quaternary structure, component of the subcortical maternal complex (SCMC), at least composed of NLRP5, KHDC3, OOEP, and TLE6. Within the complex, interacts with NLRP5, KHDC3 and TLE6. The SCMC may facilitate translocation of its components between the nuclear and cytoplasmic compartments. As part of the SCMC interacts with the SCMC-associated protein NLRP4F. Forms a scaffold complex with KHDC3/FILIA, and interacts with BLM and TRIM25 at DNA replication forks. Expressed in ovaries, where it is restricted to growing oocytes, with greatest levels in fully grown oocytes.

It is found in the cytoplasm. It localises to the nucleus. Functionally, component of the subcortical maternal complex (SCMC), a multiprotein complex that plays a key role in early embryonic development. The SCMC complex is a structural constituent of cytoplasmic lattices, which consist in fibrous structures found in the cytoplasm of oocytes and preimplantation embryos. They are required to store maternal proteins critical for embryonic development, such as proteins that control epigenetic reprogramming of the preimplantation embryo, and prevent their degradation or activation. As part of the OOEP-KHDC3 scaffold, recruits BLM and TRIM25 to DNA replication forks, thereby promoting the ubiquitination of BLM by TRIM25, enhancing BLM retainment at replication forks and therefore promoting stalled replication fork restart. Positively regulates the homologous recombination-mediated DNA double-strand break (DSB) repair pathway by regulating ATM activation and RAD51 recruitment to DSBs in oocytes. Thereby contributes to oocyte survival and the resumption and completion of meiosis. This Mus musculus (Mouse) protein is Oocyte-expressed protein homolog.